The chain runs to 155 residues: Protein SprT-like (155 aa).

Residues 7-144 (QRHMEEVSLQ…CGSCGGKLKQ (138 aa)) enclose the SprT-like domain. Position 67 (histidine 67) interacts with Zn(2+). Glutamate 68 is an active-site residue. Histidine 71 contributes to the Zn(2+) binding site.

This sequence belongs to the SprT family. The cofactor is Zn(2+).

Its subcellular location is the cytoplasm. This Listeria welshimeri serovar 6b (strain ATCC 35897 / DSM 20650 / CCUG 15529 / CIP 8149 / NCTC 11857 / SLCC 5334 / V8) protein is Protein SprT-like.